A 627-amino-acid polypeptide reads, in one-letter code: RNA interference defective protein 10 (627 aa).

Disordered stretches follow at residues 1 to 31, 467 to 487, and 523 to 589; these read MSNH…VRQN, QRDT…HDQY, and SSVR…SEDY. 3 stretches are compositionally biased toward basic and acidic residues: residues 7-16, 467-478, and 526-537; these read NFRDYQREGI, QRDTDEQYDVHQ, and REPEHPSARSRD.

The protein belongs to the maelstrom family. In terms of assembly, interacts with rde-11 (via RING-type zinc finger domain). Interacts with ergo-1.

Its function is as follows. In complex with rde-11, required in the endogenous and exogenous siRNA pathway for biogenesis and accumulation of secondary small interfering RNA (siRNA) intermediates, such as 22G-siRNAs derived from ergo-1 targets. This chain is RNA interference defective protein 10, found in Caenorhabditis elegans.